A 590-amino-acid chain; its full sequence is G protein-coupled receptor kinase 5 (590 aa).

An N-terminal region spans residues 1 to 185; sequence MELENIVANT…LERQPVTKNT (185 aa). Positions 20–39 are interaction with calmodulin; sequence GGKRKGKSKKWKEILKFPHI. Positions 53–171 constitute an RGS domain; the sequence is YCSLCDKQPV…LDSMYFDRFL (119 aa). One can recognise a Protein kinase domain in the interval 186-448; that stretch reads FRQYRVLGKG…AAEVKRHPFF (263 aa). Residues 192–200 and lysine 215 each bind ATP; that span reads LGKGGFGEV. Aspartate 311 (proton acceptor) is an active-site residue. The Nuclear localization signal signature appears at 388 to 395; it reads RKEKVKRE. The AGC-kinase C-terminal domain maps to 449 to 514; it reads RNMNFKRLEA…GSVPIPWQSE (66 aa). Residue serine 484 is modified to Phosphoserine; by autocatalysis. A Phosphothreonine; by autocatalysis modification is found at threonine 485. The segment at 546-565 is sufficient for membrane localization; it reads PKKGLLQRLFKRQHQNNSKS. Positions 554-590 are disordered; the sequence is LFKRQHQNNSKSSPNSKTSFNHHINSNHVSSNSTGSS. Residues 561-590 are compositionally biased toward low complexity; that stretch reads NNSKSSPNSKTSFNHHINSNHVSSNSTGSS. A Phosphoserine modification is found at serine 579.

Belongs to the protein kinase superfamily. AGC Ser/Thr protein kinase family. GPRK subfamily. Interacts with ST13 (via the C-terminus 303-319 AA). Interacts with TP53/p53. Interacts with HTR4 (via C-terminus 330-346 AA); this interaction is promoted by 5-HT (serotonin). Interacts with HDAC5. Interacts with GIT1. Autophosphorylated. Autophosphorylation may play a critical role in the regulation of GRK5 kinase activity. Highest levels in lung, heart, retina, lingual epithelium. Very little in brain, liver, kidney.

The protein localises to the cytoplasm. It localises to the nucleus. The protein resides in the cell membrane. The enzyme catalyses [G-protein-coupled receptor] + ATP = [G-protein-coupled receptor]-phosphate + ADP + H(+). With respect to regulation, inhibited by calmodulin with an IC(50) of 50 nM. Calmodulin inhibits GRK5 association with receptor and phospholipid. In terms of biological role, serine/threonine kinase that phosphorylates preferentially the activated forms of a variety of G-protein-coupled receptors (GPCRs). Such receptor phosphorylation initiates beta-arrestin-mediated receptor desensitization, internalization, and signaling events leading to their down-regulation. Phosphorylates a variety of GPCRs, including adrenergic receptors (Beta-2 adrenergic receptor), muscarinic acetylcholine receptors (more specifically Gi-coupled M2/M4 subtypes), dopamine receptors and opioid receptors. In addition to GPCRs, also phosphorylates various substrates: Hsc70-interacting protein/ST13, TP53/p53, HDAC5, and arrestin-1/ARRB1. Phosphorylation of ARRB1 by GRK5 inhibits G-protein independent MAPK1/MAPK3 signaling downstream of 5HT4-receptors. Phosphorylation of HDAC5, a repressor of myocyte enhancer factor 2 (MEF2) leading to nuclear export of HDAC5 and allowing MEF2-mediated transcription. Phosphorylation of TP53/p53, a crucial tumor suppressor, inhibits TP53/p53-mediated apoptosis. Phosphorylation of ST13 regulates internalization of the chemokine receptor. Phosphorylates rhodopsin (RHO) (in vitro) and a non G-protein-coupled receptor, LRP6 during Wnt signaling (in vitro). The polypeptide is G protein-coupled receptor kinase 5 (GRK5) (Bos taurus (Bovine)).